Consider the following 273-residue polypeptide: uncharacterized protein (273 aa).

2 consecutive transmembrane segments (helical) span residues 24-44 (VGVSAIDGLIAAVVAGPVTIL) and 103-123 (IVGPWAIGFSLGLSLGGEAWA). A disordered region spans residues 132–194 (SDLPHHGRQS…QPPAQTQPYR (63 aa)). Positions 164–179 (SSHHIRSPAVARHHKT) are enriched in basic residues. Residues 183-192 (TTQPPAQTQP) are compositionally biased toward low complexity.

It localises to the cell membrane. This is an uncharacterized protein from Sinorhizobium fredii (strain NBRC 101917 / NGR234).